The sequence spans 241 residues: Large ribosomal subunit protein eL32 (241 aa).

Over residues 1–16 (MADNEEDVEAEEEYTE) the composition is skewed to acidic residues. 2 disordered regions span residues 1–47 (MADN…GADQ) and 68–182 (VGGL…HPSG). Residues 29–44 (ESLREAGFESVEDVRG) are compositionally biased toward basic and acidic residues. Positions 73–96 (VESETEAEVEEEGGEEAPDEDVET) are enriched in acidic residues. Over residues 103–116 (LTEKTPDLSDEDAR) the composition is skewed to basic and acidic residues. Positions 133–159 (DHHKKKRVSTSWRKPRGQLSKQRRGIK) are enriched in basic residues.

This sequence belongs to the eukaryotic ribosomal protein eL32 family. Part of the 50S ribosomal subunit. Interacts weakly with protein L15.

Functionally, binds to the 23S rRNA. The polypeptide is Large ribosomal subunit protein eL32 (rpl32e) (Haloarcula marismortui (strain ATCC 43049 / DSM 3752 / JCM 8966 / VKM B-1809) (Halobacterium marismortui)).